We begin with the raw amino-acid sequence, 264 residues long: Indole-3-glycerol phosphate synthase (264 aa).

The protein belongs to the TrpC family.

The enzyme catalyses 1-(2-carboxyphenylamino)-1-deoxy-D-ribulose 5-phosphate + H(+) = (1S,2R)-1-C-(indol-3-yl)glycerol 3-phosphate + CO2 + H2O. The protein operates within amino-acid biosynthesis; L-tryptophan biosynthesis; L-tryptophan from chorismate: step 4/5. The polypeptide is Indole-3-glycerol phosphate synthase (Lactococcus lactis subsp. cremoris (strain MG1363)).